Here is a 289-residue protein sequence, read N- to C-terminus: Heme oxygenase 1 (289 aa).

Over residues 1-12 the composition is skewed to polar residues; that stretch reads MERPQPDSSMPQ. The interval 1–24 is disordered; that stretch reads MERPQPDSSMPQDLSEALKEATKE. Residues 1–266 are Cytoplasmic-facing; it reads MERPQPDSSM…KPQPSVLSQA (266 aa). Lysine 19, histidine 26, tyrosine 135, and arginine 184 together coordinate heme b. Residues 239–261 are disordered; it reads RRAGSKVQDLAPTKASRGKPQPS. Residue serine 243 is modified to Phosphoserine. The chain crosses the membrane as a helical; Anchor for type IV membrane protein span at residues 267–289; the sequence is PLLRWVLTLSFLVATVAVGLYAM.

Belongs to the heme oxygenase family. Homodimer and higher order homooligomer. Oligomerization is crucial for its stability and function in the endoplasmic reticulum. Interacts with FLVCR2; this interaction is potentiated in the presence of heme. In terms of processing, a soluble form arises by proteolytic removal of the membrane anchor.

The protein localises to the endoplasmic reticulum membrane. The catalysed reaction is heme b + 3 reduced [NADPH--hemoprotein reductase] + 3 O2 = biliverdin IXalpha + CO + Fe(2+) + 3 oxidized [NADPH--hemoprotein reductase] + 3 H2O + H(+). With respect to regulation, inhibited by metalloporphyrins such as Sn-, Co-, Mn- and Zn-protoporphyrins. Its function is as follows. Catalyzes the oxidative cleavage of heme at the alpha-methene bridge carbon, released as carbon monoxide (CO), to generate biliverdin IXalpha, while releasing the central heme iron chelate as ferrous iron. Affords protection against programmed cell death and this cytoprotective effect relies on its ability to catabolize free heme and prevent it from sensitizing cells to undergo apoptosis. Catalyzes the oxidative cleavage of heme at the alpha-methene bridge carbon, released as carbon monoxide (CO), to generate biliverdin IXalpha, while releasing the central heme iron chelate as ferrous iron. The protein is Heme oxygenase 1 (HMOX1) of Bos taurus (Bovine).